Here is an 88-residue protein sequence, read N- to C-terminus: Apolipoprotein C-I (88 aa).

Positions 1 to 26 (MRLFLSLPVWVAVLAMVLEGPAPAQA) are cleaved as a signal peptide.

The protein belongs to the apolipoprotein C1 family.

The protein localises to the secreted. Inhibitor of lipoprotein binding to the low density lipoprotein (LDL) receptor, LDL receptor-related protein, and very low density lipoprotein (VLDL) receptor. Associates with high density lipoproteins (HDL) and the triacylglycerol-rich lipoproteins in the plasma and makes up about 10% of the protein of the VLDL and 2% of that of HDL. Appears to interfere directly with fatty acid uptake and is also the major plasma inhibitor of cholesteryl ester transfer protein (CETP). Binds free fatty acids and reduces their intracellular esterification. Modulates the interaction of APOE with beta-migrating VLDL and inhibits binding of beta-VLDL to the LDL receptor-related protein. This is Apolipoprotein C-I (APOC1) from Ursus maritimus (Polar bear).